A 360-amino-acid polypeptide reads, in one-letter code: Ferredoxin--NADP reductase, leaf isozyme, chloroplastic (360 aa).

Residues 1–52 (MAAAVTAAVSLPYSNSTSLPIRTSIVAPERLVFKKVSLNNVSISGRVGTIRA) constitute a chloroplast transit peptide. The region spanning 81-203 (KEPYVGRCLL…TGPVGKEMLM (123 aa)) is the FAD-binding FR-type domain. Residues 139–142 (RLYS), 160–162 (CVK), Y166, 177–179 (VCS), and T218 each bind FAD. Positions 142 and 162 each coordinate NADP(+). Residues T218, 250 to 251 (VP), 280 to 281 (SR), K290, 319 to 320 (GL), and E358 contribute to the NADP(+) site.

This sequence belongs to the ferredoxin--NADP reductase type 1 family. As to quaternary structure, monomer. Interacts with TIC62 (via C-terminus). Requires FAD as cofactor.

It localises to the plastid. It is found in the chloroplast stroma. Its subcellular location is the chloroplast thylakoid membrane. It catalyses the reaction 2 reduced [2Fe-2S]-[ferredoxin] + NADP(+) + H(+) = 2 oxidized [2Fe-2S]-[ferredoxin] + NADPH. The protein operates within energy metabolism; photosynthesis. May play a key role in regulating the relative amounts of cyclic and non-cyclic electron flow to meet the demands of the plant for ATP and reducing power. This Pisum sativum (Garden pea) protein is Ferredoxin--NADP reductase, leaf isozyme, chloroplastic (PETH).